We begin with the raw amino-acid sequence, 404 residues long: Probable tRNA sulfurtransferase (404 aa).

The THUMP domain maps to 60-165; sequence HEVAESLKEI…DEAAYISYEN (106 aa). ATP-binding positions include 183–184, 208–209, R265, G287, and Q296; these read ML and HF.

It belongs to the ThiI family.

It localises to the cytoplasm. The enzyme catalyses [ThiI sulfur-carrier protein]-S-sulfanyl-L-cysteine + a uridine in tRNA + 2 reduced [2Fe-2S]-[ferredoxin] + ATP + H(+) = [ThiI sulfur-carrier protein]-L-cysteine + a 4-thiouridine in tRNA + 2 oxidized [2Fe-2S]-[ferredoxin] + AMP + diphosphate. The catalysed reaction is [ThiS sulfur-carrier protein]-C-terminal Gly-Gly-AMP + S-sulfanyl-L-cysteinyl-[cysteine desulfurase] + AH2 = [ThiS sulfur-carrier protein]-C-terminal-Gly-aminoethanethioate + L-cysteinyl-[cysteine desulfurase] + A + AMP + 2 H(+). Its pathway is cofactor biosynthesis; thiamine diphosphate biosynthesis. In terms of biological role, catalyzes the ATP-dependent transfer of a sulfur to tRNA to produce 4-thiouridine in position 8 of tRNAs, which functions as a near-UV photosensor. Also catalyzes the transfer of sulfur to the sulfur carrier protein ThiS, forming ThiS-thiocarboxylate. This is a step in the synthesis of thiazole, in the thiamine biosynthesis pathway. The sulfur is donated as persulfide by IscS. This Streptococcus agalactiae serotype III (strain NEM316) protein is Probable tRNA sulfurtransferase.